The chain runs to 357 residues: Protein MGF 360-22R (357 aa).

The ANK repeat unit spans residues 66 to 98 (DLNLALMKAVQENNYELIMLFTEWGADINLGLI).

It belongs to the asfivirus MGF 360 family.

Its function is as follows. Plays a role in virus cell tropism, and may be required for efficient virus replication in macrophages. This is Protein MGF 360-22R from African swine fever virus (isolate Tick/Malawi/Lil 20-1/1983) (ASFV).